The sequence spans 514 residues: MLLGRPLSLADLEEIARRGRPVAICAEARERAAASRRAIDAIAAAGDAAPAVYGINTGFGALAETRIADHDIRALQRNLVRSHACGVGPELGEAEVRAMIVLRAQVIALGHSGVRTEVLDLLAALLERRVSPRIPAQGSVGASGDLAPLAHLALTLIGEGEARFEGQLLPSAVALAKAGLAPIELAAKEGLALINGTQYMTALGALALRDAAALCTVADIAGAVSLEALMGSKRPFDERLMRVRPHPGQAGTAGNLRALLGGSEIMQSHADCPRVQDAYSLRCMPQVHGATRDAVAWAAEVLTREVNSVTDNPTVFLGDGADGGAELISGGNFHGQPVALALDLAAMAAAELANISERRVEQLVNPALSTGLTPFLAPHSGLHSGFMIAQVASASLVSENKVLCHPASVDSIPSSAGREDHVSMGSISARKLAQVIENVRSSLAIELITAAQGVDQRLPLRPSAGVAAAHAAIRRVVPGLTEDRPLYRDIAAAAELIQSGALIAAVEEAVGPLN.

The segment at residues 142–144 (ASG) is a cross-link (5-imidazolinone (Ala-Gly)). The residue at position 143 (Ser-143) is a 2,3-didehydroalanine (Ser).

The protein belongs to the PAL/histidase family. Post-translationally, contains an active site 4-methylidene-imidazol-5-one (MIO), which is formed autocatalytically by cyclization and dehydration of residues Ala-Ser-Gly.

It is found in the cytoplasm. It carries out the reaction L-histidine = trans-urocanate + NH4(+). It functions in the pathway amino-acid degradation; L-histidine degradation into L-glutamate; N-formimidoyl-L-glutamate from L-histidine: step 1/3. This chain is Histidine ammonia-lyase, found in Sorangium cellulosum (strain So ce56) (Polyangium cellulosum (strain So ce56)).